The primary structure comprises 804 residues: G-type lectin S-receptor-like serine/threonine-protein kinase At1g61490 (804 aa).

Residues 1–24 form the signal peptide; sequence MGKKRIVFFACLLLFTVLLRFSYA. Residues 25 to 144 form the Bulb-type lectin domain; it reads GITTESPLSV…ASGRTLWESF (120 aa). The Extracellular segment spans residues 25–425; the sequence is GITTESPLSV…SELGGNKRNK (401 aa). N-linked (GlcNAc...) asparagine glycans are attached at residues asparagine 53, asparagine 94, asparagine 117, asparagine 134, asparagine 236, and asparagine 267. The 37-residue stretch at 278 to 314 folds into the EGF-like domain; the sequence is PANSCDIYGVCGPFGLCIVSVPLKCKCLKGFVPHSTE. Intrachain disulfides connect cysteine 282/cysteine 294 and cysteine 288/cysteine 302. N-linked (GlcNAc...) asparagine glycosylation is found at asparagine 320, asparagine 336, and asparagine 375. In terms of domain architecture, PAN spans 333–415; it reads CQGNSTGKDV…GEILSIRLAH (83 aa). Cystine bridges form between cysteine 368/cysteine 389 and cysteine 372/cysteine 378. Residues 426 to 446 form a helical membrane-spanning segment; sequence IIVASTVSLSLFVILTSAAFG. Residues 447–804 lie on the Cytoplasmic side of the membrane; the sequence is FWRYRVKHKA…EMTQSMILGR (358 aa). In terms of domain architecture, Protein kinase spans 490 to 775; sequence FSLSNKLGQG…DLPSPKQPTF (286 aa). ATP contacts are provided by residues 496–504 and lysine 518; that span reads LGQGGFGSV. 2 positions are modified to phosphoserine: serine 524 and serine 539. The interval 579-596 is caM-binding; sequence RKKLEVDWPKRFDIVQGI. Residue aspartate 615 is the Proton acceptor of the active site. A phosphoserine mark is found at serine 619 and serine 632. Threonine 649 is subject to Phosphothreonine. Phosphoserine is present on serine 692.

The protein belongs to the protein kinase superfamily. Ser/Thr protein kinase family.

The protein resides in the cell membrane. It carries out the reaction L-seryl-[protein] + ATP = O-phospho-L-seryl-[protein] + ADP + H(+). The catalysed reaction is L-threonyl-[protein] + ATP = O-phospho-L-threonyl-[protein] + ADP + H(+). In Arabidopsis thaliana (Mouse-ear cress), this protein is G-type lectin S-receptor-like serine/threonine-protein kinase At1g61490.